Consider the following 317-residue polypeptide: Type II methyltransferase M.NgoBI (317 aa).

One can recognise an SAM-dependent MTase C5-type domain in the interval 2 to 302; it reads YKTIDLFSGI…KICSLLFPAR (301 aa). Residue Cys71 is part of the active site.

The protein belongs to the class I-like SAM-binding methyltransferase superfamily. C5-methyltransferase family.

The enzyme catalyses a 2'-deoxycytidine in DNA + S-adenosyl-L-methionine = a 5-methyl-2'-deoxycytidine in DNA + S-adenosyl-L-homocysteine + H(+). A methylase, recognizes the double-stranded sequence 5'-RGCGCY-3', methylates C-5 on both strands, and protects the DNA from cleavage by the NgoBI endonuclease. In Neisseria gonorrhoeae, this protein is Type II methyltransferase M.NgoBI (ngoBIM).